We begin with the raw amino-acid sequence, 416 residues long: MHMPPHLPASPPLSWPQRLEALLKDLTNFPWKSTARTLRERYSEDRLGLTASSLTFTTTMALVPLVTVALAIFTAFPMFAKLQSVLQKWLVTSLIPDNIARQVLGYLTQFAGQASKLGGAGIALLLVTAVALILTIDHTLNGIWRVRTRRSLGQRVLVYWAALTLGPLVLGVSLSITSYAISASKGVVGVMPGGVQFLLDVLQFFMVAWGMAAMYHFVPNTWVKWSHAWAGGMFVSAGLELAKKLLALYLGKVPTYSVLYGAFATVPILLIWIYVAWIIVLLGAVIAAYLPSLTSGIQHRGRSHGLQFQLALETLQQLERVRSDAVKGLTMQQLAQLLRVDALQLEPVLETLSELDWIGLLNEEFKGEAARYVMLANPDATALAPLLDTLLLRREESTQNLWEKGRWPLLNVRDVL.

6 consecutive transmembrane segments (helical) span residues 60-80 (MALV…PMFA), 117-137 (LGGA…LTID), 156-176 (VLVY…SLSI), 187-207 (VVGV…FFMV), 222-242 (WVKW…LELA), and 268-288 (ILLI…VIAA).

Belongs to the UPF0761 family.

It localises to the cell inner membrane. In Albidiferax ferrireducens (strain ATCC BAA-621 / DSM 15236 / T118) (Rhodoferax ferrireducens), this protein is UPF0761 membrane protein Rfer_2991.